Here is a 526-residue protein sequence, read N- to C-terminus: MVEILDYTKALEVLKEYPGDGLHVDTLLDSDSHGALTYNDFLILPGSITFPASDVSLETRVTRRFTIKAPLLSSPMDTVTEHSMAIHMALLGGLGVIHNNCPPDEQAEMVRKVKRYENGFIQDPIVLSPETTVGEAKELKTKWGFGGFPVTEKGTLHSKLLGIVTSRDIQFHKNHEDPVTAVMATDLVTAPAGTTLAEANEVLRSSKKGKLPIVDKDGSLISLLSRSDLMKNIHYPLASKLPSKQLLCAAAISTHDADKVRLQKLVDAGLDIVVVDSSQGHSTFQIAMIKYIKQNFPDIDVIGGNIVTREQAAALIAAGADGLRIGMGSGSACITQEVMAAGRPQAAAVRSVSAFAARFGVPTIADGGVQNLGHIVKGLALGASAVMMGSLLAGTTESPGEYFMSSEGQLVKAFRGMGSIAVMEDKSKSGAGNNAGASRYFSENDKVKVAQGVAGSVIDRGSITQYVPYLVAGVQHSLQDIGVQNLDALREGVNNGTVRFEMRSASAQTEGNVHGLHTHEKKLYSS.

2 consecutive CBS domains span residues 120–179 (FIQD…EDPV) and 183–239 (MATD…PLAS). NAD(+) contacts are provided by residues 276–278 (DSS) and 326–328 (GMG). Gly328 and Gly330 together coordinate K(+). Ser331 provides a ligand contact to IMP. Cys333 is a binding site for K(+). Cys333 acts as the Thioimidate intermediate in catalysis. IMP-binding positions include 366 to 368 (DGG) and 389 to 390 (GS). Arg439 serves as the catalytic Proton acceptor. Gln451 lines the IMP pocket. Residue Ser506 coordinates K(+). The segment at 506–526 (SAQTEGNVHGLHTHEKKLYSS) is disordered. A compositionally biased stretch (basic and acidic residues) spans 517 to 526 (HTHEKKLYSS).

This sequence belongs to the IMPDH/GMPR family. Homotetramer. The cofactor is K(+).

The protein localises to the cytoplasm. The enzyme catalyses IMP + NAD(+) + H2O = XMP + NADH + H(+). The protein operates within secondary metabolite biosynthesis; terpenoid biosynthesis. Mycophenolic acid (MPA) is a non-competitive inhibitor that prevents formation of the closed enzyme conformation by binding to the same site as the amobile flap. In contrast, mizoribine monophosphate (MZP) is a competitive inhibitor that induces the closed conformation. MPA is a potent inhibitor of mammalian IMPDHs but a poor inhibitor of the bacterial enzymes. MZP is a more potent inhibitor of bacterial IMPDH. Catalyzes the conversion of inosine 5'-phosphate (IMP) to xanthosine 5'-phosphate (XMP), the first committed and rate-limiting step in the de novo synthesis of guanine nucleotides, and therefore plays an important role in the regulation of cell growth. Part of the gene cluster that mediates the biosynthesis of mycophenolic acid (MPA), the first isolated antibiotic natural product in the world. Does not play a role in the biosynthesis of MPA, but is involved in self resistance to MPA, since MPA acts as an inhibitor of IMP dehydrogenases. The polypeptide is Inosine-5'-monophosphate dehydrogenase (Penicillium roqueforti (strain FM164)).